Here is a 1274-residue protein sequence, read N- to C-terminus: MPEPGKKPVSAFSKKPRSVEVAAGSPAVFEAETERAGVKVRWQRGGSDISASNKYGLATEGTRHTLTVREVGPADQGSYAVIAGSSKVKFDLKVIEAEKAEPMLAPAPAPAEATGAPGEAPAPAAELGESAPSPKGSSSAALNGPTPGAPDDPIGLFVMRPQDGEVTVGGSITFSARVAGASLLKPPVVKWFKGKWVDLSSKVGQHLQLHDSYDRASKVYLFELHITDAQPAFTGSYRCEVSTKDKFDCSNFNLTVHEAMGTGDLDLLSAFRRTSLAGGGRRISDSHEDTGILDFSSLLKKRDSFRTPRDSKLEAPAEEDVWEILRQAPPSEYERIAFQYGVTDLRGMLKRLKGMRRDEKKSTAFQKKLEPAYQVSKGHKIRLTVELADHDAEVKWLKNGQEIQMSGSKYIFESIGAKRTLTISQCSLADDAAYQCVVGGEKCSTELFVKEPPVLITRPLEDQLVMVGQRVEFECEVSEEGAQVKWLKDGVELTREETFKYRFKKDGQRHHLIINEAMLEDAGHYALCTSGGQALAELIVQEKKLEVYQSIADLMVGAKDQAVFKCEVSDENVRGVWLKNGKELVPDSRIKVSHIGRVHKLTIDDVTPADEADYSFVPEGFACNLSAKLHFMEVKIDFVPRQEPPKIHLDCPGRIPDTIVVVAGNKLRLDVPISGDPAPTVIWQKAITQGNKAPARPAPDAPEDTGDSDEWVFDKKLLCETEGRVRVETTKDRSIFTVEGAEKEDEGVYTVTVKNPVGEDQVNLTVKVIDVPDAPAAPKISNVGEDSCTVQWEPPAYDGGQPILGYILERKKKKSYRWMRLNFDLIQELSHEARRMIEGVVYEMRVYAVNAIGMSRPSPASQPFMPIGPPSEPTHLAVEDVSDTTVSLKWRPPERVGAGGLDGYSVEYCPEGCSEWVAALQGLTEHTSILVKDLPTGARLLFRVRAHNMAGPGAPVTTTEPVTVQEILQRPRLQLPRHLRQTIQKKVGEPVNLLIPFQGKPRPQVTWTKEGQPLAGEEVSIRNSPTDTILFIRAARRVHSGTYQVTVRIENMEDKATLVLQVVDKPSPPQDLRVTDAWGLNVALEWKPPQDVGNTELWGYTVQKADKKTMEWFTVLEHYRRTHCVVPELIIGNGYYFRVFSQNMVGFSDRAATTKEPVFIPRPGITYEPPNYKALDFSEAPSFTQPLVNRSVIAGYTAMLCCAVRGSPKPKISWFKNGLDLGEDARFRMFSKQGVLTLEIRKPCPFDGGIYVCRATNLQGEARCECRLEVRVPQ.

M1 carries the post-translational modification N-acetylmethionine. A Phosphoserine modification is found at S47. The span at 107-141 shows a compositional bias: low complexity; sequence APAPAEATGAPGEAPAPAAELGESAPSPKGSSSAA. Residues 107-153 are disordered; that stretch reads APAPAEATGAPGEAPAPAAELGESAPSPKGSSSAALNGPTPGAPDDP. The Ig-like C2-type 1 domain occupies 153 to 256; it reads PIGLFVMRPQ…FDCSNFNLTV (104 aa). 4 residues coordinate Zn(2+): Q208, H210, E223, and H225. Residues S275, S284, and S304 each carry the phosphoserine; by PKA and PKC modification. S311 and S427 each carry phosphoserine. Ig-like C2-type domains are found at residues 362–452, 453–543, 544–633, and 645–771; these read STAF…VKEP, PVLI…VQEK, KLEV…HFME, and PKIH…VIDV. C436 and C443 are disulfide-bonded. S550 carries the post-translational modification Phosphoserine. A Phosphothreonine modification is found at T607. Fibronectin type-III domains are found at residues 774–870 and 872–967; these read APAA…IGPP and EPTH…VQEI. The Ig-like C2-type 6 domain maps to 971–1065; that stretch reads PRLQLPRHLR…ATLVLQVVDK (95 aa). The Fibronectin type-III 3 domain occupies 1068–1163; that stretch reads PPQDLRVTDA…TKEPVFIPRP (96 aa). The region spanning 1181 to 1274 is the Ig-like C2-type 7 domain; sequence PSFTQPLVNR…ECRLEVRVPQ (94 aa). An Omega-N-methylarginine modification is found at R1241.

The protein belongs to the immunoglobulin superfamily. MyBP family. In terms of processing, substrate for phosphorylation by PKA and PKC. Reversible phosphorylation appears to modulate contraction. Polyubiquitinated.

Functionally, thick filament-associated protein located in the crossbridge region of vertebrate striated muscle a bands. In vitro it binds MHC, F-actin and native thin filaments, and modifies the activity of actin-activated myosin ATPase. It may modulate muscle contraction or may play a more structural role. In Homo sapiens (Human), this protein is Myosin-binding protein C, cardiac-type (MYBPC3).